Consider the following 409-residue polypeptide: Tyrosine--tRNA ligase (409 aa).

Tyrosine 35 contributes to the L-tyrosine binding site. The 'HIGH' region signature appears at 40-49 (CTAESLHVGS). L-tyrosine-binding residues include tyrosine 172 and glutamine 176. Residues 232-236 (KMGKT) carry the 'KMSKS' region motif. Lysine 235 provides a ligand contact to ATP. Positions 343–409 (ISILDLVILS…KKKHIKVELI (67 aa)) constitute an S4 RNA-binding domain.

This sequence belongs to the class-I aminoacyl-tRNA synthetase family. TyrS type 1 subfamily. Homodimer.

The protein resides in the cytoplasm. The catalysed reaction is tRNA(Tyr) + L-tyrosine + ATP = L-tyrosyl-tRNA(Tyr) + AMP + diphosphate + H(+). Catalyzes the attachment of tyrosine to tRNA(Tyr) in a two-step reaction: tyrosine is first activated by ATP to form Tyr-AMP and then transferred to the acceptor end of tRNA(Tyr). The sequence is that of Tyrosine--tRNA ligase from Pelagibacter ubique (strain HTCC1062).